The following is a 651-amino-acid chain: Protein EXECUTER 2, chloroplastic (651 aa).

Residues 1–69 (MATTQPCLIG…KAPSLSCLRN (69 aa)) constitute a chloroplast transit peptide. The region spanning 103–138 (ESVVSLLKSQLEDAVEKEDFEEAVKLKQAISEATVD) is the UVR domain. The disordered stretch occupies residues 330 to 359 (DATEELVGEGTEETNSSDDEEEVEEEENDS).

It is found in the plastid. It localises to the chloroplast. Together with EX1, enables higher plants to perceive singlet oxygen as a stress signal in plastid that activates a genetically determined nuclear stress response program which triggers a programmed cell death (PCD). This transfer of singlet oxygen-induced stress-related signals from the plastid to the nucleus that triggers genetically controlled PCD pathway is unique to photosynthetic eukaryotes and operates under mild stress conditions, impeding photosystem II (PSII) without causing photooxidative damage of the plant. The protein is Protein EXECUTER 2, chloroplastic of Arabidopsis thaliana (Mouse-ear cress).